The primary structure comprises 427 residues: Enolase (427 aa).

A (2R)-2-phosphoglycerate-binding site is contributed by Gln163. The Proton donor role is filled by Glu205. 3 residues coordinate Mg(2+): Asp242, Glu285, and Asp312. Positions 337, 366, 367, and 388 each coordinate (2R)-2-phosphoglycerate. The active-site Proton acceptor is the Lys337.

This sequence belongs to the enolase family. Requires Mg(2+) as cofactor.

Its subcellular location is the cytoplasm. The protein resides in the secreted. It localises to the cell surface. It catalyses the reaction (2R)-2-phosphoglycerate = phosphoenolpyruvate + H2O. It participates in carbohydrate degradation; glycolysis; pyruvate from D-glyceraldehyde 3-phosphate: step 4/5. Its function is as follows. Catalyzes the reversible conversion of 2-phosphoglycerate (2-PG) into phosphoenolpyruvate (PEP). It is essential for the degradation of carbohydrates via glycolysis. The sequence is that of Enolase from Leptothrix cholodnii (strain ATCC 51168 / LMG 8142 / SP-6) (Leptothrix discophora (strain SP-6)).